Reading from the N-terminus, the 420-residue chain is Proteinase-activated receptor 1 (420 aa).

A signal peptide spans 1–20 (MMELRVLLLLLLLTLLGAMG). The propeptide at 21 to 42 (SLCLANSDTQAKGAHSNNMTIK) is removed for receptor activation. A glycan (N-linked (GlcNAc...) asparagine) is linked at Asn-38. At 43 to 101 (TFRIFDDSESEFEEIPWDELDESGEGSGDQAPVSRSARKPIRRNITKEAEQYLSSQWLT) the chain is on the extracellular side. The interval 61-80 (ELDESGEGSGDQAPVSRSAR) is disordered. Residue Asn-86 is glycosylated (N-linked (GlcNAc...) asparagine). Residues 102 to 127 (KFVPSLYTVVFIVGLPLNLLAIIIFL) traverse the membrane as a helical segment. Over 128–136 (FKMKVRKPA) the chain is Cytoplasmic. A helical transmembrane segment spans residues 137 to 156 (VVYMLNLAIADVFFVSVLPF). The Extracellular segment spans residues 157 to 175 (KIAYHLSGNDWLFGPGMCR). Cys-174 and Cys-253 are disulfide-bonded. Residues 176–197 (IVTAIFYCNMYCSVLLIASISV) form a helical membrane-spanning segment. Residues 198–217 (DRFLAVVYPMHSLSWRTMSR) lie on the Cytoplasmic side of the membrane. The helical transmembrane segment at 218-238 (AYMACSFIWLISIASTIPLLV) threads the bilayer. Topologically, residues 239–267 (TEQTQKIPRLDITTCHDVLDLKDLKDFYI) are extracellular. Residues 268 to 287 (YYFSSFCLLFFFVPFIITTI) traverse the membrane as a helical segment. The Cytoplasmic portion of the chain corresponds to 288–310 (CYIGIIRSLSSSSIENSCKKTRA). The helical transmembrane segment at 311–333 (LFLAVVVLCVFIICFGPTNVLFL) threads the bilayer. Residues 334–345 (THYLQEANEFLY) are Extracellular-facing. Residues 346–369 (FAYILSACVGSVSCCLDPLIYYYA) traverse the membrane as a helical segment. The Cytoplasmic segment spans residues 370–420 (SSQCQRYLYSLLCCRKVSEPGSSTGQLMSTAMKNDNCSTNAKSSIYKKLLA).

It belongs to the G-protein coupled receptor 1 family. Post-translationally, proteolytic cleavage generates a new N-terminus that functions as a tethered ligand.

It localises to the cell membrane. In terms of biological role, high affinity receptor that binds the activated thrombin, leading to calcium release from intracellular stores. The thrombin-activated receptor signaling pathway is mediated through PTX-insensitive G proteins, activation of phospholipase C resulting in the production of 1D-myo-inositol 1,4,5-trisphosphate (InsP3) which binds to InsP3 receptors causing calcium release from the stores. This is Proteinase-activated receptor 1 from Xenopus laevis (African clawed frog).